Consider the following 380-residue polypeptide: tRNA-specific 2-thiouridylase MnmA (380 aa).

Residues 14 to 21 and M40 contribute to the ATP site; that span reads GLSGGVDS. The tract at residues 100–102 is interaction with target base in tRNA; it reads NPD. The active-site Nucleophile is C105. C105 and C203 are disulfide-bonded. G129 is a binding site for ATP. Residues 153 to 155 are interaction with tRNA; it reads KDQ. The active-site Cysteine persulfide intermediate is C203. An interaction with tRNA region spans residues 322-323; the sequence is RY.

The protein belongs to the MnmA/TRMU family.

Its subcellular location is the cytoplasm. It carries out the reaction S-sulfanyl-L-cysteinyl-[protein] + uridine(34) in tRNA + AH2 + ATP = 2-thiouridine(34) in tRNA + L-cysteinyl-[protein] + A + AMP + diphosphate + H(+). Functionally, catalyzes the 2-thiolation of uridine at the wobble position (U34) of tRNA, leading to the formation of s(2)U34. The polypeptide is tRNA-specific 2-thiouridylase MnmA (Leptothrix cholodnii (strain ATCC 51168 / LMG 8142 / SP-6) (Leptothrix discophora (strain SP-6))).